A 732-amino-acid chain; its full sequence is Catalase-peroxidase (732 aa).

The segment at residues 96–219 is a cross-link (tryptophyl-tyrosyl-methioninium (Trp-Tyr) (with M-245)); sequence WHSAGTYRIG…LGAVQMGLIY (124 aa). His-97 serves as the catalytic Proton acceptor. The tryptophyl-tyrosyl-methioninium (Tyr-Met) (with W-96) cross-link spans 219 to 245; it reads YVNPEGPNGHPDPVASGRDIRETFGRM. A heme b-binding site is contributed by His-260.

Belongs to the peroxidase family. Peroxidase/catalase subfamily. In terms of assembly, homodimer or homotetramer. The cofactor is heme b. Post-translationally, formation of the three residue Trp-Tyr-Met cross-link is important for the catalase, but not the peroxidase activity of the enzyme.

The catalysed reaction is H2O2 + AH2 = A + 2 H2O. It carries out the reaction 2 H2O2 = O2 + 2 H2O. Bifunctional enzyme with both catalase and broad-spectrum peroxidase activity. The sequence is that of Catalase-peroxidase from Acaryochloris marina (strain MBIC 11017).